The chain runs to 256 residues: tRNA (guanine-N(7)-)-methyltransferase (256 aa).

Residues E85, E110, D137, and D159 each contribute to the S-adenosyl-L-methionine site. D159 is a catalytic residue. Substrate contacts are provided by K163 and D195.

This sequence belongs to the class I-like SAM-binding methyltransferase superfamily. TrmB family.

It carries out the reaction guanosine(46) in tRNA + S-adenosyl-L-methionine = N(7)-methylguanosine(46) in tRNA + S-adenosyl-L-homocysteine. It participates in tRNA modification; N(7)-methylguanine-tRNA biosynthesis. Functionally, catalyzes the formation of N(7)-methylguanine at position 46 (m7G46) in tRNA. The chain is tRNA (guanine-N(7)-)-methyltransferase from Rhodopseudomonas palustris (strain BisB5).